We begin with the raw amino-acid sequence, 289 residues long: ATP synthase subunit a (289 aa).

Helical transmembrane passes span 43 to 63, 103 to 123, 160 to 180, 193 to 213, 232 to 252, and 259 to 279; these read AFHL…LLIF, VIAP…AVDL, FCVF…GGFI, IFVQ…TLIA, VFIL…GLGV, and AVFH…LTIV.

It belongs to the ATPase A chain family. In terms of assembly, F-type ATPases have 2 components, CF(1) - the catalytic core - and CF(0) - the membrane proton channel. CF(1) has five subunits: alpha(3), beta(3), gamma(1), delta(1), epsilon(1). CF(0) has three main subunits: a(1), b(2) and c(9-12). The alpha and beta chains form an alternating ring which encloses part of the gamma chain. CF(1) is attached to CF(0) by a central stalk formed by the gamma and epsilon chains, while a peripheral stalk is formed by the delta and b chains.

It localises to the cell inner membrane. In terms of biological role, key component of the proton channel; it plays a direct role in the translocation of protons across the membrane. The sequence is that of ATP synthase subunit a from Pseudomonas putida (strain ATCC 700007 / DSM 6899 / JCM 31910 / BCRC 17059 / LMG 24140 / F1).